The sequence spans 355 residues: Holliday junction branch migration complex subunit RuvB (355 aa).

Residues 4 to 195 (TDKLTGADRL…FGIVARLEFY (192 aa)) form a large ATPase domain (RuvB-L) region. Residues Leu-34, Arg-35, Gly-76, Lys-79, Thr-80, Thr-81, 142 to 144 (EDY), Arg-185, Tyr-195, and Arg-232 each bind ATP. Thr-80 provides a ligand contact to Mg(2+). A small ATPAse domain (RuvB-S) region spans residues 196-266 (TPDELARIVA…LADAALEMLD (71 aa)). A head domain (RuvB-H) region spans residues 269–355 (SVGFDLMDRK…DGGADLAEGL (87 aa)). The DNA site is built by Arg-305, Arg-324, and Arg-329.

The protein belongs to the RuvB family. In terms of assembly, homohexamer. Forms an RuvA(8)-RuvB(12)-Holliday junction (HJ) complex. HJ DNA is sandwiched between 2 RuvA tetramers; dsDNA enters through RuvA and exits via RuvB. An RuvB hexamer assembles on each DNA strand where it exits the tetramer. Each RuvB hexamer is contacted by two RuvA subunits (via domain III) on 2 adjacent RuvB subunits; this complex drives branch migration. In the full resolvosome a probable DNA-RuvA(4)-RuvB(12)-RuvC(2) complex forms which resolves the HJ.

The protein localises to the cytoplasm. The catalysed reaction is ATP + H2O = ADP + phosphate + H(+). In terms of biological role, the RuvA-RuvB-RuvC complex processes Holliday junction (HJ) DNA during genetic recombination and DNA repair, while the RuvA-RuvB complex plays an important role in the rescue of blocked DNA replication forks via replication fork reversal (RFR). RuvA specifically binds to HJ cruciform DNA, conferring on it an open structure. The RuvB hexamer acts as an ATP-dependent pump, pulling dsDNA into and through the RuvAB complex. RuvB forms 2 homohexamers on either side of HJ DNA bound by 1 or 2 RuvA tetramers; 4 subunits per hexamer contact DNA at a time. Coordinated motions by a converter formed by DNA-disengaged RuvB subunits stimulates ATP hydrolysis and nucleotide exchange. Immobilization of the converter enables RuvB to convert the ATP-contained energy into a lever motion, pulling 2 nucleotides of DNA out of the RuvA tetramer per ATP hydrolyzed, thus driving DNA branch migration. The RuvB motors rotate together with the DNA substrate, which together with the progressing nucleotide cycle form the mechanistic basis for DNA recombination by continuous HJ branch migration. Branch migration allows RuvC to scan DNA until it finds its consensus sequence, where it cleaves and resolves cruciform DNA. The protein is Holliday junction branch migration complex subunit RuvB of Cupriavidus metallidurans (strain ATCC 43123 / DSM 2839 / NBRC 102507 / CH34) (Ralstonia metallidurans).